We begin with the raw amino-acid sequence, 367 residues long: 2-aminoethylphosphonate--pyruvate transaminase (367 aa).

At Lys193 the chain carries N6-(pyridoxal phosphate)lysine.

It belongs to the class-V pyridoxal-phosphate-dependent aminotransferase family. PhnW subfamily. As to quaternary structure, homodimer. The cofactor is pyridoxal 5'-phosphate.

It catalyses the reaction (2-aminoethyl)phosphonate + pyruvate = phosphonoacetaldehyde + L-alanine. Functionally, involved in phosphonate degradation. In Vibrio vulnificus (strain YJ016), this protein is 2-aminoethylphosphonate--pyruvate transaminase.